We begin with the raw amino-acid sequence, 176 residues long: Small ribosomal subunit protein uS5 (176 aa).

The region spanning 11–74 is the S5 DRBM domain; that stretch reads LSEVLVDVNR…QAAKKKMMKV (64 aa).

Belongs to the universal ribosomal protein uS5 family. As to quaternary structure, part of the 30S ribosomal subunit. Contacts proteins S4 and S8.

In terms of biological role, with S4 and S12 plays an important role in translational accuracy. Located at the back of the 30S subunit body where it stabilizes the conformation of the head with respect to the body. This is Small ribosomal subunit protein uS5 from Rickettsia bellii (strain RML369-C).